The following is a 346-amino-acid chain: Cyclin-dependent kinase 7 (346 aa).

Residue Ala-2 is modified to N-acetylalanine. Ser-7 carries the phosphoserine modification. A Protein kinase domain is found at 12-295; sequence YEKLDFLGEG…ATQALKMKYF (284 aa). Residues 18 to 26 and Lys-41 contribute to the ATP site; that span reads LGEGQFATV. The active-site Proton acceptor is Asp-137. Position 164 is a phosphoserine; by CDK1 and CDK2 (Ser-164). Residue Thr-170 is modified to Phosphothreonine; by CDK2. Residue Ser-321 is modified to Phosphoserine.

Belongs to the protein kinase superfamily. CMGC Ser/Thr protein kinase family. CDC2/CDKX subfamily. As to quaternary structure, associates primarily with cyclin-H (CCNH) and MAT1 to form the CAK complex. CAK can further associate with the core-TFIIH to form the TFIIH basal transcription factor; this complex is sensitive to UV light. The CAK complex binds to p53/TP53 in response to DNA damage. Interacts with CDK2, SF1/NR5A1, PUF60 and PRKCI. Interacts with HINT1. Phosphorylation of Ser-164 during mitosis inactivates the enzyme. Phosphorylation of Thr-170 is required for activity. Phosphorylated at Ser-164 and Thr-170 by CDK2. Ubiquitous.

It localises to the nucleus. It is found in the cytoplasm. The protein resides in the perinuclear region. The enzyme catalyses L-seryl-[protein] + ATP = O-phospho-L-seryl-[protein] + ADP + H(+). It carries out the reaction L-threonyl-[protein] + ATP = O-phospho-L-threonyl-[protein] + ADP + H(+). The catalysed reaction is [DNA-directed RNA polymerase] + ATP = phospho-[DNA-directed RNA polymerase] + ADP + H(+). Its activity is regulated as follows. Inactivated by phosphorylation. Repressed by roscovitine (seliciclib, CYC202), R547 (Ro-4584820) and SNS-032 (BMS-387032). The association of p53/TP53 to the CAK complex in response to DNA damage reduces kinase activity toward CDK2 and RNA polymerase II repetitive C-terminal domain (CTD), thus stopping cell cycle progression. The inactivation by roscovitine promotes caspase-mediated apoptosis in leukemic cells. Specifically inactivated by THZ1. Functionally, serine/threonine kinase involved in cell cycle control and in RNA polymerase II-mediated RNA transcription. Cyclin-dependent kinases (CDKs) are activated by the binding to a cyclin and mediate the progression through the cell cycle. Each different complex controls a specific transition between 2 subsequent phases in the cell cycle. Required for both activation and complex formation of CDK1/cyclin-B during G2-M transition, and for activation of CDK2/cyclins during G1-S transition (but not complex formation). CDK7 is the catalytic subunit of the CDK-activating kinase (CAK) complex. Phosphorylates SPT5/SUPT5H, SF1/NR5A1, POLR2A, p53/TP53, CDK1, CDK2, CDK4, CDK6 and CDK11B/CDK11. Initiates transcription by RNA polymerase II by mediating phosphorylation of POLR2A at 'Ser-5' of the repetitive C-terminal domain (CTD) when POLR2A is in complex with DNA, promoting dissociation from DNA and initiation. CAK activates the cyclin-associated kinases CDK1, CDK2, CDK4 and CDK6 by threonine phosphorylation, thus regulating cell cycle progression. CAK complexed to the core-TFIIH basal transcription factor activates RNA polymerase II by serine phosphorylation of the CTD of POLR2A, allowing its escape from the promoter and elongation of the transcripts. Its expression and activity are constant throughout the cell cycle. Upon DNA damage, triggers p53/TP53 activation by phosphorylation, but is inactivated in turn by p53/TP53; this feedback loop may lead to an arrest of the cell cycle and of the transcription, helping in cell recovery, or to apoptosis. Required for DNA-bound peptides-mediated transcription and cellular growth inhibition. The chain is Cyclin-dependent kinase 7 (CDK7) from Homo sapiens (Human).